Here is a 310-residue protein sequence, read N- to C-terminus: GPN-loop GTPase 2 (310 aa).

Ala-2 bears the N-acetylalanine mark. 19 to 24 (GSGKTT) provides a ligand contact to GTP. Positions 76–78 (GPN) match the Gly-Pro-Asn (GPN)-loop; involved in dimer interface motif. 178 to 181 (SKMD) contributes to the GTP binding site.

This sequence belongs to the GPN-loop GTPase family. As to quaternary structure, heterodimers with GPN1 or GPN3. Binds to RNA polymerase II (RNAPII).

Small GTPase required for proper localization of RNA polymerase II and III (RNAPII and RNAPIII). May act at an RNAP assembly step prior to nuclear import. This chain is GPN-loop GTPase 2, found in Homo sapiens (Human).